Consider the following 157-residue polypeptide: Small ribosomal subunit protein uS7cz/uS7cy (157 aa).

The protein belongs to the universal ribosomal protein uS7 family. Part of the 30S ribosomal subunit.

It localises to the plastid. The protein resides in the chloroplast. One of the primary rRNA binding proteins, it binds directly to 16S rRNA where it nucleates assembly of the head domain of the 30S subunit. This is Small ribosomal subunit protein uS7cz/uS7cy (rps7-A) from Welwitschia mirabilis (Tree tumbo).